The following is a 99-amino-acid chain: Signal recognition particle 19 kDa protein (99 aa).

The protein belongs to the SRP19 family. In terms of assembly, part of the signal recognition particle protein translocation system, which is composed of SRP and FtsY. Archaeal SRP consists of a 7S RNA molecule of 300 nucleotides and two protein subunits: SRP54 and SRP19.

Its subcellular location is the cytoplasm. In terms of biological role, involved in targeting and insertion of nascent membrane proteins into the cytoplasmic membrane. Binds directly to 7S RNA and mediates binding of the 54 kDa subunit of the SRP. The polypeptide is Signal recognition particle 19 kDa protein (Pyrococcus horikoshii (strain ATCC 700860 / DSM 12428 / JCM 9974 / NBRC 100139 / OT-3)).